Consider the following 98-residue polypeptide: Keratinocyte differentiation-associated protein (98 aa).

A signal peptide spans 1 to 22 (MKIPILPIVALLSLLALHAAQG).

As to expression, ubiquitously expressed in stratified epithelium.

It localises to the secreted. Functionally, may act as a soluble regulator of keratinocyte differentiation. May play an important role in embryonic skin morphogenesis. The sequence is that of Keratinocyte differentiation-associated protein from Rattus norvegicus (Rat).